We begin with the raw amino-acid sequence, 201 residues long: Retinol-binding protein 4 (201 aa).

The signal sequence occupies residues 1–18 (MEWVWALVLLAALGGGSA). 3 disulfides stabilise this stretch: Cys-22/Cys-178, Cys-88/Cys-192, and Cys-138/Cys-147. Gln-116 contacts substrate. Omega-N-methylarginine is present on Arg-139.

This sequence belongs to the calycin superfamily. Lipocalin family. In terms of assembly, interacts with TTR. Interaction with TTR prevents its loss by filtration through the kidney glomeruli. Interacts with STRA6. As to expression, detected in blood plasma (at protein level).

The protein localises to the secreted. Functionally, retinol-binding protein that mediates retinol transport in blood plasma. Delivers retinol from the liver stores to the peripheral tissues. Transfers the bound all-trans retinol to STRA6, that then facilitates retinol transport across the cell membrane. This is Retinol-binding protein 4 (Rbp4) from Rattus norvegicus (Rat).